The sequence spans 84 residues: Small ribosomal subunit protein bS18 (84 aa).

This sequence belongs to the bacterial ribosomal protein bS18 family. In terms of assembly, part of the 30S ribosomal subunit. Forms a tight heterodimer with protein bS6.

In terms of biological role, binds as a heterodimer with protein bS6 to the central domain of the 16S rRNA, where it helps stabilize the platform of the 30S subunit. This is Small ribosomal subunit protein bS18 from Polynucleobacter necessarius subsp. necessarius (strain STIR1).